The sequence spans 703 residues: Calcium-responsive transcription factor (703 aa).

Disordered stretches follow at residues 1–61 (MEQS…QNIP), 130–150 (GPLVDENSPQDVSEEKPSDRN), and 517–539 (GNSQGESVSSKLETNQTRNSLSP). Positions 9–22 (KVNHNDSEESKTDS) are enriched in basic and acidic residues. Polar residues predominate over residues 23 to 34 (QHLTYMDSSEPS).

It is found in the nucleus. Functionally, acts as a transcriptional activator that mediates the calcium- and neuron-selective induction of BDNF exon III transcription. Binds to the consensus calcium-response element CaRE1 5'-CTATTTCGAG-3' sequence. This Bos taurus (Bovine) protein is Calcium-responsive transcription factor (CARF).